The following is a 112-amino-acid chain: Large ribosomal subunit protein eL30y (112 aa).

It belongs to the eukaryotic ribosomal protein eL30 family.

The polypeptide is Large ribosomal subunit protein eL30y (RPL30B) (Arabidopsis thaliana (Mouse-ear cress)).